The sequence spans 210 residues: Imidazole glycerol phosphate synthase subunit HisH (210 aa).

One can recognise a Glutamine amidotransferase type-1 domain in the interval 1–205 (MIAVINYGAG…VELALSRGSG (205 aa)). The active-site Nucleophile is the Cys79. Active-site residues include His180 and Glu182.

As to quaternary structure, heterodimer of HisH and HisF.

It is found in the cytoplasm. The catalysed reaction is 5-[(5-phospho-1-deoxy-D-ribulos-1-ylimino)methylamino]-1-(5-phospho-beta-D-ribosyl)imidazole-4-carboxamide + L-glutamine = D-erythro-1-(imidazol-4-yl)glycerol 3-phosphate + 5-amino-1-(5-phospho-beta-D-ribosyl)imidazole-4-carboxamide + L-glutamate + H(+). The enzyme catalyses L-glutamine + H2O = L-glutamate + NH4(+). It participates in amino-acid biosynthesis; L-histidine biosynthesis; L-histidine from 5-phospho-alpha-D-ribose 1-diphosphate: step 5/9. Functionally, IGPS catalyzes the conversion of PRFAR and glutamine to IGP, AICAR and glutamate. The HisH subunit catalyzes the hydrolysis of glutamine to glutamate and ammonia as part of the synthesis of IGP and AICAR. The resulting ammonia molecule is channeled to the active site of HisF. The sequence is that of Imidazole glycerol phosphate synthase subunit HisH from Herpetosiphon aurantiacus (strain ATCC 23779 / DSM 785 / 114-95).